The sequence spans 329 residues: Fructose-1,6-bisphosphatase class 1 (329 aa).

Mg(2+) contacts are provided by E84, D103, L105, and D106. Substrate is bound by residues 106–109 (DGSS), N196, and K262. E268 is a binding site for Mg(2+).

The protein belongs to the FBPase class 1 family. As to quaternary structure, homotetramer. It depends on Mg(2+) as a cofactor.

It localises to the cytoplasm. It catalyses the reaction beta-D-fructose 1,6-bisphosphate + H2O = beta-D-fructose 6-phosphate + phosphate. The protein operates within carbohydrate biosynthesis; gluconeogenesis. This chain is Fructose-1,6-bisphosphatase class 1, found in Shewanella loihica (strain ATCC BAA-1088 / PV-4).